The chain runs to 648 residues: Threonine--tRNA ligase (648 aa).

Positions 1–61 constitute a TGS domain; sequence MIDIILPDGS…INTATVKAIT (61 aa). Residues 243–549 are catalytic; sequence DHRKLGRELE…LIEHYSGKLP (307 aa). Residues C349, H400, and H526 each coordinate Zn(2+).

The protein belongs to the class-II aminoacyl-tRNA synthetase family. As to quaternary structure, homodimer. Requires Zn(2+) as cofactor.

Its subcellular location is the cytoplasm. It carries out the reaction tRNA(Thr) + L-threonine + ATP = L-threonyl-tRNA(Thr) + AMP + diphosphate + H(+). Functionally, catalyzes the attachment of threonine to tRNA(Thr) in a two-step reaction: L-threonine is first activated by ATP to form Thr-AMP and then transferred to the acceptor end of tRNA(Thr). Also edits incorrectly charged L-seryl-tRNA(Thr). In Orientia tsutsugamushi (strain Ikeda) (Rickettsia tsutsugamushi), this protein is Threonine--tRNA ligase.